A 147-amino-acid chain; its full sequence is Large ribosomal subunit protein uL13 (147 aa).

Belongs to the universal ribosomal protein uL13 family. In terms of assembly, part of the 50S ribosomal subunit.

Functionally, this protein is one of the early assembly proteins of the 50S ribosomal subunit, although it is not seen to bind rRNA by itself. It is important during the early stages of 50S assembly. This Mycolicibacterium smegmatis (strain ATCC 700084 / mc(2)155) (Mycobacterium smegmatis) protein is Large ribosomal subunit protein uL13.